We begin with the raw amino-acid sequence, 277 residues long: Large ribosomal subunit protein uL2 (277 aa).

Residues 222 to 277 are disordered; the sequence is GVAMNPIDHPHGGGEGRTSGGRHPVTPWGKPTKGKKTRTNKSTDKFILLSRHKRKK.

It belongs to the universal ribosomal protein uL2 family. In terms of assembly, part of the 50S ribosomal subunit. Forms a bridge to the 30S subunit in the 70S ribosome.

In terms of biological role, one of the primary rRNA binding proteins. Required for association of the 30S and 50S subunits to form the 70S ribosome, for tRNA binding and peptide bond formation. It has been suggested to have peptidyltransferase activity; this is somewhat controversial. Makes several contacts with the 16S rRNA in the 70S ribosome. This chain is Large ribosomal subunit protein uL2, found in Bradyrhizobium sp. (strain ORS 278).